The following is a 170-amino-acid chain: Group 2 truncated hemoglobin 3-1 (170 aa).

Histidine 98 provides a ligand contact to heme b.

This sequence belongs to the truncated hemoglobin family. Group II subfamily. As to quaternary structure, homodimer when ferric.

Its function is as follows. Hemoglobin-like protein that exhibits an unusual concentration-independent binding of O(2) and CO. Required for general plant development and during nodulation. May promote shoot organogenesis from root explants. The polypeptide is Group 2 truncated hemoglobin 3-1 (Medicago truncatula (Barrel medic)).